Consider the following 172-residue polypeptide: Ribosome maturation factor RimM (172 aa).

The PRC barrel domain maps to 97–170 (ENEFYFHEII…KITIEVMEGL (74 aa)).

Belongs to the RimM family. As to quaternary structure, binds ribosomal protein uS19.

The protein resides in the cytoplasm. Its function is as follows. An accessory protein needed during the final step in the assembly of 30S ribosomal subunit, possibly for assembly of the head region. Essential for efficient processing of 16S rRNA. May be needed both before and after RbfA during the maturation of 16S rRNA. It has affinity for free ribosomal 30S subunits but not for 70S ribosomes. The protein is Ribosome maturation factor RimM of Listeria innocua serovar 6a (strain ATCC BAA-680 / CLIP 11262).